A 264-amino-acid chain; its full sequence is MKQYLDLMNKVLAEGTPKADRTGTGTLSIFGHQMRFNLQEGFPLVTTKKCHLRSIIHELLWFLNGDTNVAYLKENKVSIWDEWADENGNLGPVYGKQWRAWGTADGRQIDQLTTVLNQLKQDPDSRRIIVSAWNVGELDQMALAPCHAFFQFYVADGKLSCQLYQRSCDVFLGLPFNIASYALLVHMMAQQCDLEVGDFVWTGGDTHLYSNHMEQTQLQLTREPRALPKLVIKRKPASLFDYRFEDFEIEGYDPHPAIKAPVAI.

R21 provides a ligand contact to dUMP. (6R)-5,10-methylene-5,6,7,8-tetrahydrofolate is bound at residue H51. 126-127 (RR) contributes to the dUMP binding site. Catalysis depends on C146, which acts as the Nucleophile. DUMP is bound by residues 166–169 (RSCD), N177, and 207–209 (HLY). D169 contacts (6R)-5,10-methylene-5,6,7,8-tetrahydrofolate. (6R)-5,10-methylene-5,6,7,8-tetrahydrofolate is bound at residue A263.

It belongs to the thymidylate synthase family. Bacterial-type ThyA subfamily. As to quaternary structure, homodimer.

It localises to the cytoplasm. It catalyses the reaction dUMP + (6R)-5,10-methylene-5,6,7,8-tetrahydrofolate = 7,8-dihydrofolate + dTMP. Its pathway is pyrimidine metabolism; dTTP biosynthesis. Its function is as follows. Catalyzes the reductive methylation of 2'-deoxyuridine-5'-monophosphate (dUMP) to 2'-deoxythymidine-5'-monophosphate (dTMP) while utilizing 5,10-methylenetetrahydrofolate (mTHF) as the methyl donor and reductant in the reaction, yielding dihydrofolate (DHF) as a by-product. This enzymatic reaction provides an intracellular de novo source of dTMP, an essential precursor for DNA biosynthesis. The protein is Thymidylate synthase of Serratia proteamaculans (strain 568).